The chain runs to 349 residues: Nicotinate-nucleotide--dimethylbenzimidazole phosphoribosyltransferase (349 aa).

The Proton acceptor role is filled by glutamate 318.

This sequence belongs to the CobT family.

The enzyme catalyses 5,6-dimethylbenzimidazole + nicotinate beta-D-ribonucleotide = alpha-ribazole 5'-phosphate + nicotinate + H(+). Its pathway is nucleoside biosynthesis; alpha-ribazole biosynthesis; alpha-ribazole from 5,6-dimethylbenzimidazole: step 1/2. Functionally, catalyzes the synthesis of alpha-ribazole-5'-phosphate from nicotinate mononucleotide (NAMN) and 5,6-dimethylbenzimidazole (DMB). This chain is Nicotinate-nucleotide--dimethylbenzimidazole phosphoribosyltransferase, found in Geobacter sp. (strain M21).